The following is a 293-amino-acid chain: Extracellular metalloprotease MGYG_00389 (293 aa).

Positions 1–19 are cleaved as a signal peptide; sequence MRFSVFLPAIAALSSAVAA. N-linked (GlcNAc...) asparagine glycosylation is found at Asn-49 and Asn-53. His-184 contributes to the Zn(2+) binding site. Glu-185 is a catalytic residue. His-188 contacts Zn(2+). A disulfide bond links Cys-223 and Cys-249. Residues 270–293 are disordered; it reads GSGSGSVTRPRPKPPVLMDYEHRL.

Belongs to the peptidase M43B family.

The protein resides in the secreted. Functionally, secreted metalloproteinase that allows assimilation of proteinaceous substrates. Plays a pivotal role as a pathogenicity determinant during infections and contributes to the ability of the pathogen to persist within the mammalian host. This Arthroderma gypseum (strain ATCC MYA-4604 / CBS 118893) (Microsporum gypseum) protein is Extracellular metalloprotease MGYG_00389.